A 139-amino-acid polypeptide reads, in one-letter code: Cystatin-11 (139 aa).

The first 28 residues, 1-28, serve as a signal peptide directing secretion; the sequence is MAAGSWKATRLLLAILVALVAFSYQVKR. 2 disulfide bridges follow: Cys94–Cys102 and Cys115–Cys135. N-linked (GlcNAc...) asparagine glycosylation occurs at Asn134.

It belongs to the cystatin family. Expressed in epididymis, where it localizes to the proximal caput and also part of the midcaput. Not detected in other tissues tested.

Its subcellular location is the secreted. In terms of biological role, has antibacterial activity against the Gram-negative bacteria E.coli. May play a role in sperm maturation and fertilization. This chain is Cystatin-11, found in Mus musculus (Mouse).